The following is a 194-amino-acid chain: Casparian strip membrane protein 2 (194 aa).

Over 1–32 the chain is Cytoplasmic; it reads MSTTIDIPESSKVVKGKGVVAAPLRPGGWKKG. Residues 33 to 53 traverse the membrane as a helical segment; that stretch reads VAIMDFILRLGAIAAALGAAA. The Extracellular portion of the chain corresponds to 54–82; sequence TMGTSDQTLPFFTQFFQFEASYDSFTTFQ. The helical transmembrane segment at 83–103 threads the bilayer; the sequence is FFVITMALVGGYLVLSLPFSV. Topologically, residues 104 to 115 are cytoplasmic; the sequence is VAIIRPHAVGPR. A helical transmembrane segment spans residues 116–136; the sequence is LFLIILDTVFLTLATASAASA. At 137 to 168 the chain is on the extracellular side; that stretch reads AAVVYLAHNGDQDTNWLAICNQFGDFCAQTSS. A helical transmembrane segment spans residues 169-189; the sequence is AVVSSFVAVVVFVLLIVMSAL. The Cytoplasmic portion of the chain corresponds to 190-194; it reads AMGKP.

This sequence belongs to the Casparian strip membrane proteins (CASP) family. In terms of assembly, homodimer and heterodimers.

The protein localises to the cell membrane. Its function is as follows. Regulates membrane-cell wall junctions and localized cell wall deposition. Required for establishment of the Casparian strip membrane domain (CSD) and the subsequent formation of Casparian strips, a cell wall modification of the root endodermis that determines an apoplastic barrier between the intraorganismal apoplasm and the extraorganismal apoplasm and prevents lateral diffusion. In Vigna unguiculata (Cowpea), this protein is Casparian strip membrane protein 2.